The primary structure comprises 407 residues: MRQLLPGDTVWRNIRLATMDPQRQAPYGLVDSQALIVREGHICDIVPETQLPVSGDNIHDMQGRLVTPGLIDCHTHLVFAGNRAAEWEQRLNGASYQHISAQGGGINATVSATRACAEETLYLLARERMMRLASEGVTLLEIKSGYGLELATEEKLLRVAAKLAAENAIDISPTLLAAHATPAEYRDDPDGYITLVCETMIPQLWQKGLFDAVDLFCESVGFNVAQSERVLQTAKALGIPVKGHVEQLSLLGGAQLVSRYQGLSADHIEYLDEAGVAAMRDGGTVGVLLPGAFYFLRETQRPPVELLRRYQVPVAVASDFNPGTSPFCSLHLAMNMACVQFGLTPEEAWSGVTRHAARALGRQATHGQIRAGYRADFVVWDAEQPVEIVYEPGRNPLYQRVYRGQIS.

Fe(3+)-binding residues include histidine 74 and histidine 76. 2 residues coordinate Zn(2+): histidine 74 and histidine 76. 3 residues coordinate 4-imidazolone-5-propanoate: arginine 83, tyrosine 146, and histidine 179. Tyrosine 146 contributes to the N-formimidoyl-L-glutamate binding site. Histidine 244 is a Fe(3+) binding site. Histidine 244 lines the Zn(2+) pocket. Glutamine 247 contributes to the 4-imidazolone-5-propanoate binding site. Fe(3+) is bound at residue aspartate 319. Aspartate 319 lines the Zn(2+) pocket. N-formimidoyl-L-glutamate contacts are provided by asparagine 321 and glycine 323. Threonine 324 is a binding site for 4-imidazolone-5-propanoate.

It belongs to the metallo-dependent hydrolases superfamily. HutI family. Zn(2+) is required as a cofactor. Fe(3+) serves as cofactor.

Its subcellular location is the cytoplasm. It catalyses the reaction 4-imidazolone-5-propanoate + H2O = N-formimidoyl-L-glutamate. Its pathway is amino-acid degradation; L-histidine degradation into L-glutamate; N-formimidoyl-L-glutamate from L-histidine: step 3/3. Its function is as follows. Catalyzes the hydrolytic cleavage of the carbon-nitrogen bond in imidazolone-5-propanoate to yield N-formimidoyl-L-glutamate. It is the third step in the universal histidine degradation pathway. In Salmonella typhi, this protein is Imidazolonepropionase.